The primary structure comprises 592 residues: Aspartate--tRNA(Asp/Asn) ligase (592 aa).

Glu-175 contacts L-aspartate. Positions 199 to 202 are aspartate; the sequence is QQFK. Residues Arg-221 and His-451 each coordinate L-aspartate. ATP is bound at residue 221–223; sequence RDE. Glu-485 is a binding site for ATP. Arg-492 provides a ligand contact to L-aspartate. Residue 537-540 coordinates ATP; sequence GIDR.

The protein belongs to the class-II aminoacyl-tRNA synthetase family. Type 1 subfamily. In terms of assembly, homodimer.

Its subcellular location is the cytoplasm. It carries out the reaction tRNA(Asx) + L-aspartate + ATP = L-aspartyl-tRNA(Asx) + AMP + diphosphate. Aspartyl-tRNA synthetase with relaxed tRNA specificity since it is able to aspartylate not only its cognate tRNA(Asp) but also tRNA(Asn). Reaction proceeds in two steps: L-aspartate is first activated by ATP to form Asp-AMP and then transferred to the acceptor end of tRNA(Asp/Asn). The sequence is that of Aspartate--tRNA(Asp/Asn) ligase from Phenylobacterium zucineum (strain HLK1).